A 214-amino-acid chain; its full sequence is Redox-sensing transcriptional repressor Rex (214 aa).

A DNA-binding region (H-T-H motif) is located at residues 18–57 (LYYRLVNQLHEKGIDRVNSKTISEALDIDSASIRRDFSYF). NAD(+) is bound at residue 92 to 97 (GVGNLG).

The protein belongs to the transcriptional regulatory Rex family. In terms of assembly, homodimer.

The protein localises to the cytoplasm. In terms of biological role, modulates transcription in response to changes in cellular NADH/NAD(+) redox state. The chain is Redox-sensing transcriptional repressor Rex from Staphylococcus carnosus (strain TM300).